The following is a 640-amino-acid chain: Putative solute carrier organic anion transporter family member 1B7 (640 aa).

The Extracellular portion of the chain corresponds to 1 to 16 (MKISTTQIERRFEISS). Residues 17–37 (SLVGLIDGSFEIGNLFVIVFV) form a helical membrane-spanning segment. Topologically, residues 38 to 49 (SYFGSKLHRPKL) are cytoplasmic. Residues 50–70 (IGIGCFLMGTGSILMALPHFF) form a helical membrane-spanning segment. Residues 71 to 123 (MGYYRYSKETNIDPSENSTSNLPNCLINQMLSLNRTPSEIIERGCVKESGSHM) lie on the Extracellular side of the membrane. A helical transmembrane segment spans residues 124–144 (WIYVFMGNMLRGIGETPIVPL). The Cytoplasmic portion of the chain corresponds to 145–159 (GISYIDDFAKEGHSS). The helical transmembrane segment at 160–180 (LYLGTVNVMGMTGLVFAFMLG) threads the bilayer. Residues 181 to 211 (SLFAKMYVDIGYVDLSTIRITPKDSRWVGAW) are Extracellular-facing. The chain crosses the membrane as a helical span at residues 212 to 232 (WLGFLVSGIVSIISSIPFFFL). At 233-292 (PLNPNKPQKERKVSLFLHVLKTNDKRNQIANLTNRRKYITKNVTGFFQSLKSILTNPLYV) the chain is on the cytoplasmic side. Ser246 is subject to Phosphoserine. The helical transmembrane segment at 293–313 (IFVIFTLLHMSSYIASLTYII) threads the bilayer. Residues 314 to 329 (KMVEQQYGWSASKTNF) are Extracellular-facing. Residues 330–350 (LLGVLALPAVAIGMFSGGYII) form a helical membrane-spanning segment. Topologically, residues 351 to 362 (KKFKLSLVGLAK) are cytoplasmic. A helical membrane pass occupies residues 363-383 (LAFCSATVHLLSQVLYFFLIC). Topologically, residues 384–492 (ESKSVAGLTL…CTRKSYVYFV (109 aa)) are extracellular. In terms of domain architecture, Kazal-like spans 406 to 461 (DVPLSYCNSECNCDESQWEPVCGNNGITYLSPCLAGCKSSSGNKEPIVFYNCSCVE). 3 cysteine pairs are disulfide-bonded: Cys412/Cys442, Cys418/Cys438, and Cys427/Cys459. The chain crosses the membrane as a helical span at residues 493–513 (IQVLDAFLCAVGLTSYSVLVI). Topologically, residues 514–521 (RIVQPELK) are cytoplasmic. A helical membrane pass occupies residues 522–542 (ALAIGFHSMIMRSLGGILVPI). Residues 543 to 577 (YFGALIDTTCMKWSTNSCGARGACRIYNSTYLGRA) are Extracellular-facing. A helical membrane pass occupies residues 578–598 (FFGLKVALIFPVLVLLTVFIF). Residues 599 to 640 (VVRKKSHGKDTKVLENERQVMDEANLEFLNDSEHFVPSAEEQ) lie on the Cytoplasmic side of the membrane. Ser636 bears the Phosphoserine mark.

Belongs to the organo anion transporter (TC 2.A.60) family.

Its subcellular location is the cell membrane. The sequence is that of Putative solute carrier organic anion transporter family member 1B7 (SLCO1B7) from Homo sapiens (Human).